A 237-amino-acid chain; its full sequence is Large ribosomal subunit protein bL25 (237 aa).

The N-terminal domain stretch occupies residues methionine 1–serine 104. The segment at glutamine 105–glutamine 189 is middle domain. Residues valine 190 to glutamine 237 are C-terminal domain. The disordered stretch occupies residues glutamate 205 to glutamine 237.

It belongs to the bacterial ribosomal protein bL25 family. CTC subfamily. In terms of assembly, part of the 50S ribosomal subunit. Contacts proteins L11 and L16, the A site tRNA, and the 5S and 23S rRNAs.

Its function is as follows. This is one of 3 proteins that mediate the attachment of the 5S rRNA onto the large ribosomal subunit. This protein has three domains. The N-terminal one is bound on the solvent face, the middle domain fills the space between the 5S rRNA and the L11 arm contacting the 23S rRNA while the C-terminal domain is on the edge of the intersubunit interface and contacts the A site. The protein conformation changes upon binding of a tRNA mimic to the A site, although the mimic does not interact directly with CTC itself, consistent with CTCs presumed role in moderating A site binding. The polypeptide is Large ribosomal subunit protein bL25 (rplY) (Deinococcus radiodurans (strain ATCC 13939 / DSM 20539 / JCM 16871 / CCUG 27074 / LMG 4051 / NBRC 15346 / NCIMB 9279 / VKM B-1422 / R1)).